The primary structure comprises 166 residues: Small ribosomal subunit protein eS10 (166 aa).

The segment at 95–166 (RRQTRPETAR…FGRGRGQQPQ (72 aa)) is disordered. Residues 98 to 129 (TRPETARPRPKGLEGERPARLARGEGDRDAYR) are compositionally biased toward basic and acidic residues. The span at 143–154 (AGAGAATEFQFR) shows a compositional bias: low complexity. The segment covering 155-166 (GGFGRGRGQQPQ) has biased composition (gly residues).

It belongs to the eukaryotic ribosomal protein eS10 family. Component of the small ribosomal subunit.

The protein localises to the cytoplasm. The protein resides in the nucleus. Its subcellular location is the nucleolus. Its function is as follows. Component of the 40S ribosomal subunit. The ribosome is a large ribonucleoprotein complex responsible for the synthesis of proteins in the cell. This Ictalurus punctatus (Channel catfish) protein is Small ribosomal subunit protein eS10 (rps10).